The primary structure comprises 363 residues: Zinc phosphodiesterase ELAC protein 1 (363 aa).

Zn(2+) contacts are provided by histidine 62, histidine 64, aspartate 66, histidine 67, histidine 182, aspartate 253, and histidine 313. Aspartate 66 serves as the catalytic Proton acceptor.

Belongs to the RNase Z family. In terms of assembly, homodimer. Zn(2+) serves as cofactor. As to expression, widely expressed. Expressed in heart, brain, placenta, lung, liver, skeletal muscle, kidney and pancreas.

It localises to the cytoplasm. The protein resides in the cytosol. The protein localises to the nucleus. It catalyses the reaction Endonucleolytic cleavage of RNA, removing extra 3' nucleotides from tRNA precursor, generating 3' termini of tRNAs. A 3'-hydroxy group is left at the tRNA terminus and a 5'-phosphoryl group is left at the trailer molecule.. Zinc phosphodiesterase, which displays some tRNA 3'-processing endonuclease activity. Specifically involved in tRNA repair: acts downstream of the ribosome-associated quality control (RQC) pathway by removing a 2',3'-cyclic phosphate from tRNAs following cleavage by ANKZF1. tRNAs are then processed by TRNT1. In Homo sapiens (Human), this protein is Zinc phosphodiesterase ELAC protein 1.